We begin with the raw amino-acid sequence, 237 residues long: Zinc finger AN1 domain-containing stress-associated protein 14 (237 aa).

The interval 1–31 is disordered; it reads MATKRKCPANGDDGGVADLEPVAGGSFASPP. The AN1-type zinc finger occupies 171 to 217; the sequence is QPEANRCATCRRKVGLTGFKCRCGGTFCGGHRYADEHGCGFDYKSSG. Cys177, Cys180, Cys191, Cys193, Cys198, His201, His207, and Cys209 together coordinate Zn(2+).

Its function is as follows. May be involved in environmental stress response. This is Zinc finger AN1 domain-containing stress-associated protein 14 (SAP14) from Oryza sativa subsp. japonica (Rice).